A 643-amino-acid chain; its full sequence is Threonine--tRNA ligase (643 aa).

The region spanning 1–61 is the TGS domain; it reads MPIITLPDGS…SEDATLEIIT (61 aa). A catalytic region spans residues 243 to 534; that stretch reads DHRKIGKALD…ITEEYAGFFP (292 aa). Cys-334, His-385, and His-511 together coordinate Zn(2+).

Belongs to the class-II aminoacyl-tRNA synthetase family. As to quaternary structure, homodimer. Requires Zn(2+) as cofactor.

Its subcellular location is the cytoplasm. The enzyme catalyses tRNA(Thr) + L-threonine + ATP = L-threonyl-tRNA(Thr) + AMP + diphosphate + H(+). Catalyzes the attachment of threonine to tRNA(Thr) in a two-step reaction: L-threonine is first activated by ATP to form Thr-AMP and then transferred to the acceptor end of tRNA(Thr). Also edits incorrectly charged L-seryl-tRNA(Thr). The protein is Threonine--tRNA ligase of Glaesserella parasuis serovar 5 (strain SH0165) (Haemophilus parasuis).